The chain runs to 265 residues: Phosphate import ATP-binding protein PstB 1 (265 aa).

One can recognise an ABC transporter domain in the interval 20–260 (LSTNDLSVLY…PKGKITEDYI (241 aa)). 53–60 (GASGSGKS) contributes to the ATP binding site.

Belongs to the ABC transporter superfamily. Phosphate importer (TC 3.A.1.7) family. In terms of assembly, the complex is composed of two ATP-binding proteins (PstB), two transmembrane proteins (PstC and PstA) and a solute-binding protein (PstS).

It localises to the cell membrane. The catalysed reaction is phosphate(out) + ATP + H2O = ADP + 2 phosphate(in) + H(+). Its function is as follows. Part of the ABC transporter complex PstSACB involved in phosphate import. Responsible for energy coupling to the transport system. The chain is Phosphate import ATP-binding protein PstB 1 from Lactobacillus acidophilus (strain ATCC 700396 / NCK56 / N2 / NCFM).